Here is a 151-residue protein sequence, read N- to C-terminus: Odorant-binding protein (151 aa).

Intrachain disulfides connect Cys38-Cys42 and Cys57-Cys149.

Belongs to the calycin superfamily. Lipocalin family. Expressed in salivary glands, hair and urine.

The protein localises to the secreted. In terms of biological role, may act as a pheromone. The chain is Odorant-binding protein from Phodopus sungorus (Striped hairy-footed hamster).